The chain runs to 466 residues: Soluble pyridine nucleotide transhydrogenase (466 aa).

Position 36 to 45 (36 to 45 (EKESSVGGGC)) interacts with FAD.

This sequence belongs to the class-I pyridine nucleotide-disulfide oxidoreductase family. FAD serves as cofactor.

Its subcellular location is the cytoplasm. The catalysed reaction is NAD(+) + NADPH = NADH + NADP(+). Its function is as follows. Conversion of NADPH, generated by peripheral catabolic pathways, to NADH, which can enter the respiratory chain for energy generation. The polypeptide is Soluble pyridine nucleotide transhydrogenase (Vibrio atlanticus (strain LGP32) (Vibrio splendidus (strain Mel32))).